Here is a 215-residue protein sequence, read N- to C-terminus: Osteoclast-stimulating factor 1 (215 aa).

The residue at position 2 (serine 2) is an N-acetylserine. Residues 12-71 (GQVKVFRALYTFEPRTPDELYFEEGDIIYITDMSDTSWWKGTCKGRTGLIPSNYVAEQAE) form the SH3 domain. 3 ANK repeats span residues 72–101 (SIDN…GVNG), 105–135 (AGST…ELNQ), and 139–168 (LGDT…RTDL). The tract at residues 192–215 (KQQGTDGARTLSNAEDYLDDEDSD) is disordered. Threonine 201 is modified (phosphothreonine). Serine 203 and serine 214 each carry phosphoserine.

Interacts with C-SRC and SMN1. Interacts with FASLG.

It is found in the cytoplasm. Functionally, induces bone resorption, acting probably through a signaling cascade which results in the secretion of factor(s) enhancing osteoclast formation and activity. In Mus musculus (Mouse), this protein is Osteoclast-stimulating factor 1 (Ostf1).